Here is a 583-residue protein sequence, read N- to C-terminus: Afadin- and alpha-actinin-binding protein (583 aa).

3 coiled-coil regions span residues 108–220 (NNVE…LAIE), 255–333 (DYEA…QLTN), and 420–453 (EEKE…AIRL). The segment at 285–328 (LSPCPPLNRGGSAEESQELGDSDREERSAETSRETLDQSCEHAR) is disordered. Positions 305–328 (DSDREERSAETSRETLDQSCEHAR) are enriched in basic and acidic residues. The segment at 480 to 527 (DRMRSSSSDGQSALSVKSEPEIRTSSSKAPPVKSSAYTTFSTPKSSKS) is disordered. The segment covering 484–494 (SSSSDGQSALS) has biased composition (polar residues). The span at 504–515 (SSSKAPPVKSSA) shows a compositional bias: low complexity. The span at 516 to 527 (YTTFSTPKSSKS) shows a compositional bias: polar residues.

This sequence belongs to the ADIP family.

It is found in the cell junction. The protein resides in the adherens junction. The protein localises to the cytoplasm. Its subcellular location is the cytoskeleton. It localises to the microtubule organizing center. It is found in the centrosome. The protein resides in the centriolar satellite. Its function is as follows. Belongs to an adhesion system, which plays a role in the organization of homotypic, interneuronal and heterotypic cell-cell adherens junctions (AJs). Involved in cell movement. Acts as a centrosome maturation factor, probably by maintaining the integrity of the pericentriolar material and proper microtubule nucleation at mitotic spindle poles. The chain is Afadin- and alpha-actinin-binding protein (ssx2ip) from Oryzias latipes (Japanese rice fish).